Reading from the N-terminus, the 467-residue chain is ADP-dependent glucose/glucosamine kinase (467 aa).

The 458-residue stretch at 10–467 (RLWKRLYVNA…FVSEFGMRKR (458 aa)) folds into the ADPK domain. D-glucose contacts are provided by residues Asp-42, Glu-96, Gly-120, 120–121 (GQ), His-184, and Asp-211. Residue Glu-279 coordinates Mg(2+). An ADP-binding site is contributed by Asn-305. Residue Glu-308 participates in Mg(2+) binding. Residues 352-353 (HT), Val-440, and Gly-450 each bind ADP. Asp-451 contributes to the D-glucose binding site. Asp-451 is a Mg(2+) binding site. Asp-451 serves as the catalytic Proton acceptor.

This sequence belongs to the ADP-dependent glucokinase family. In terms of assembly, monomer. It depends on Mg(2+) as a cofactor.

It localises to the cytoplasm. The enzyme catalyses D-glucose + ADP = D-glucose 6-phosphate + AMP + H(+). It catalyses the reaction D-glucosamine + ADP = D-glucosamine 6-phosphate + AMP + H(+). Its pathway is carbohydrate degradation; glycolysis. Its function is as follows. Catalyzes the ADP-dependent phosphorylation of D-glucose to D-glucose 6-phosphate and glucosamine to glucosamine 6-phosphate. Can also use CDP as the phosphoryl group donor and D-1,5-anhydroglucitol as the phosphoryl group acceptor. This chain is ADP-dependent glucose/glucosamine kinase, found in Thermococcus litoralis (strain ATCC 51850 / DSM 5473 / JCM 8560 / NS-C).